The sequence spans 190 residues: Xanthine phosphoribosyltransferase (190 aa).

Positions 20 and 27 each coordinate xanthine. Residue 128–132 coordinates 5-phospho-alpha-D-ribose 1-diphosphate; that stretch reads ANGKA. Residue lysine 156 coordinates xanthine.

This sequence belongs to the purine/pyrimidine phosphoribosyltransferase family. Xpt subfamily. As to quaternary structure, homodimer.

Its subcellular location is the cytoplasm. The enzyme catalyses XMP + diphosphate = xanthine + 5-phospho-alpha-D-ribose 1-diphosphate. It participates in purine metabolism; XMP biosynthesis via salvage pathway; XMP from xanthine: step 1/1. Its function is as follows. Converts the preformed base xanthine, a product of nucleic acid breakdown, to xanthosine 5'-monophosphate (XMP), so it can be reused for RNA or DNA synthesis. In Pseudomonas putida (strain ATCC 700007 / DSM 6899 / JCM 31910 / BCRC 17059 / LMG 24140 / F1), this protein is Xanthine phosphoribosyltransferase.